Reading from the N-terminus, the 504-residue chain is Alpha-L-arabinofuranosidase C (504 aa).

4 N-linked (GlcNAc...) asparagine glycosylation sites follow: asparagine 81, asparagine 152, asparagine 269, and asparagine 329.

Belongs to the glycosyl hydrolase 51 family.

It localises to the secreted. The catalysed reaction is Hydrolysis of terminal non-reducing alpha-L-arabinofuranoside residues in alpha-L-arabinosides.. Its pathway is glycan metabolism; L-arabinan degradation. Its function is as follows. Alpha-L-arabinofuranosidase involved in the degradation of arabinoxylan, a major component of plant hemicellulose. Acts only on small linear 1,5-alpha-linked L-arabinofuranosyl oligosaccharides. The protein is Alpha-L-arabinofuranosidase C (abfC) of Emericella nidulans (strain FGSC A4 / ATCC 38163 / CBS 112.46 / NRRL 194 / M139) (Aspergillus nidulans).